The sequence spans 150 residues: D-aminoacyl-tRNA deacylase (150 aa).

The Gly-cisPro motif, important for rejection of L-amino acids motif lies at 138–139 (GP).

The protein belongs to the DTD family. As to quaternary structure, homodimer.

Its subcellular location is the cytoplasm. The enzyme catalyses glycyl-tRNA(Ala) + H2O = tRNA(Ala) + glycine + H(+). It carries out the reaction a D-aminoacyl-tRNA + H2O = a tRNA + a D-alpha-amino acid + H(+). An aminoacyl-tRNA editing enzyme that deacylates mischarged D-aminoacyl-tRNAs. Also deacylates mischarged glycyl-tRNA(Ala), protecting cells against glycine mischarging by AlaRS. Acts via tRNA-based rather than protein-based catalysis; rejects L-amino acids rather than detecting D-amino acids in the active site. By recycling D-aminoacyl-tRNA to D-amino acids and free tRNA molecules, this enzyme counteracts the toxicity associated with the formation of D-aminoacyl-tRNA entities in vivo and helps enforce protein L-homochirality. This chain is D-aminoacyl-tRNA deacylase, found in Flavobacterium johnsoniae (strain ATCC 17061 / DSM 2064 / JCM 8514 / BCRC 14874 / CCUG 350202 / NBRC 14942 / NCIMB 11054 / UW101) (Cytophaga johnsonae).